The sequence spans 333 residues: Bacteriocin helveticin-J (333 aa).

This heat-sensitive bacteriocin inhibits the growth of closely related Lactobacillus species. This chain is Bacteriocin helveticin-J (hlv), found in Lactobacillus helveticus (Lactobacillus suntoryeus).